A 267-amino-acid polypeptide reads, in one-letter code: Regulatory protein RecX (267 aa).

The protein belongs to the RecX family.

It localises to the cytoplasm. Modulates RecA activity. The sequence is that of Regulatory protein RecX from Staphylococcus carnosus (strain TM300).